A 426-amino-acid chain; its full sequence is Gamma-glutamyl phosphate reductase (426 aa).

This sequence belongs to the gamma-glutamyl phosphate reductase family.

The protein localises to the cytoplasm. The catalysed reaction is L-glutamate 5-semialdehyde + phosphate + NADP(+) = L-glutamyl 5-phosphate + NADPH + H(+). It functions in the pathway amino-acid biosynthesis; L-proline biosynthesis; L-glutamate 5-semialdehyde from L-glutamate: step 2/2. Its function is as follows. Catalyzes the NADPH-dependent reduction of L-glutamate 5-phosphate into L-glutamate 5-semialdehyde and phosphate. The product spontaneously undergoes cyclization to form 1-pyrroline-5-carboxylate. In Cupriavidus metallidurans (strain ATCC 43123 / DSM 2839 / NBRC 102507 / CH34) (Ralstonia metallidurans), this protein is Gamma-glutamyl phosphate reductase.